Consider the following 397-residue polypeptide: Acetate kinase (397 aa).

Position 8 (asparagine 8) interacts with Mg(2+). An ATP-binding site is contributed by lysine 15. Arginine 89 is a binding site for substrate. The active-site Proton donor/acceptor is aspartate 146. ATP is bound by residues 206 to 210 (HLGNG), 281 to 283 (DLR), and 329 to 333 (GVGEN). Glutamate 382 serves as a coordination point for Mg(2+).

Belongs to the acetokinase family. In terms of assembly, homodimer. It depends on Mg(2+) as a cofactor. The cofactor is Mn(2+).

It is found in the cytoplasm. The catalysed reaction is acetate + ATP = acetyl phosphate + ADP. It functions in the pathway metabolic intermediate biosynthesis; acetyl-CoA biosynthesis; acetyl-CoA from acetate: step 1/2. Catalyzes the formation of acetyl phosphate from acetate and ATP. Can also catalyze the reverse reaction. This Bacillus cereus (strain ATCC 10987 / NRS 248) protein is Acetate kinase.